A 93-amino-acid chain; its full sequence is Putative regulatory protein Clos_1422 (93 aa).

It belongs to the RemA family.

The polypeptide is Putative regulatory protein Clos_1422 (Alkaliphilus oremlandii (strain OhILAs) (Clostridium oremlandii (strain OhILAs))).